The chain runs to 1002 residues: Calmin (1002 aa).

Residues 1–288 (MAAHEWDWFQ…IMTYVAQFLE (288 aa)) are actin-binding. The 108-residue stretch at 32-139 (NVQKRTFTRW…LIWNIILFFQ (108 aa)) folds into the Calponin-homology (CH) 1 domain. Positions 149–168 (RNSPSSSLSPGSGGTDSDSS) are enriched in low complexity. The interval 149–180 (RNSPSSSLSPGSGGTDSDSSFPPTPTAERSVA) is disordered. The Calponin-homology (CH) 2 domain maps to 187-291 (RKAIKALLAW…YVAQFLERFP (105 aa)). A phosphoserine mark is found at Ser301 and Ser402. 4 disordered regions span residues 389–418 (QGGP…GRSN), 500–532 (NNNS…GENT), 581–716 (NKVP…SPPL), and 749–911 (DLKN…DSSI). The span at 396-409 (SDISEPSPESSILS) shows a compositional bias: low complexity. The span at 500 to 509 (NNNSQSSSCN) shows a compositional bias: polar residues. Over residues 585–606 (SPHETKPDEDAEAFENHAEKLG) the composition is skewed to basic and acidic residues. Positions 607-617 (KRSIKSAHKKK) are enriched in basic residues. Basic and acidic residues-rich tracts occupy residues 618–635 (DSPE…HQDS) and 650–659 (PVDKKPEVHE). Ser619 carries the phosphoserine modification. The span at 681-697 (GVGEELSSSPPSSCVSL) shows a compositional bias: low complexity. Thr699 is subject to Phosphothreonine. Ser713 and Ser769 each carry phosphoserine. Residues 776-794 (GSQSSSSSSVPGESLPSAS) are compositionally biased toward low complexity. Basic and acidic residues predominate over residues 818 to 834 (PHEDHQQRETKENDPMD). Residues 835 to 846 (SHQSQESPNLEN) are compositionally biased toward polar residues. 2 positions are modified to phosphoserine: Ser838 and Ser841. The span at 854–863 (NVTKESISSK) shows a compositional bias: basic and acidic residues. A compositionally biased stretch (polar residues) spans 898–910 (YSIPSRTSHSDSS). Phosphoserine is present on Ser907. Residues 977–997 (MMYFILFLWLLVYCLLLFPQL) traverse the membrane as a helical; Anchor for type IV membrane protein segment.

As to expression, widely expressed at intermediate level.

Its subcellular location is the membrane. The chain is Calmin (CLMN) from Homo sapiens (Human).